The following is a 317-amino-acid chain: Putative GTPase PH0274 (317 aa).

Residues 54–62 (GPPGAGKST), aspartate 196, and 231–233 (VGT) each bind GTP.

This sequence belongs to the SIMIBI class G3E GTPase family. ArgK/MeaB subfamily.

Its function is as follows. May have GTPase activity. May also bind and hydrolyze ATP. May function as chaperone. This is Putative GTPase PH0274 from Pyrococcus horikoshii (strain ATCC 700860 / DSM 12428 / JCM 9974 / NBRC 100139 / OT-3).